The sequence spans 421 residues: MMRARVPLLLLGILFLASLSASFATSLREEEESQDNPFYFNSDNSWNTLFKNQYGHIRVLQRFDQQSKRLQNLEDYRLVEFRSKPETLLLPQQADAELLLVVRSGSAILVLVKPDDRREYFFLTSDNPIFSDHQKIPAGTIFYLVNPDPKEDLRIIQLAMPVNNPQIHEFFLSSTEAQQSYLQEFSKHILEASFNSKFEEINRVLFEEEGQQEGVIVNIDSEQIKELSKHAKSSSRKSLSKQDNTIGNEFGNLTERTDNSLNVLISSIEMEEGALFVPHYYSKAIVILVVNEGEAHVELVGPKGNKETLEYESYRAELSKDDVFVIPAAYPVAIKATSNVNFTGFGINANNNNRNLLAGKTDNVISSIGRALDGKDVLGLTFSGSGDEVMKLINKQSGSYFVDAHHHQQEQQKGRKGAFVY.

An N-terminal signal peptide occupies residues 1–24 (MMRARVPLLLLGILFLASLSASFA). A Cupin type-1 domain is found at 237-390 (KSLSKQDNTI…TFSGSGDEVM (154 aa)). N-linked (GlcNAc...) asparagine glycosylation is found at N252 and N341.

Belongs to the 7S seed storage protein family. In terms of assembly, homotrimer that associates to form a dodecamer.

It is found in the vacuole. Its subcellular location is the aleurone grain. Its function is as follows. Major seed storage protein. This chain is Phaseolin, beta-type, found in Phaseolus vulgaris (Kidney bean).